The chain runs to 281 residues: Survival motor neuron protein 1 (281 aa).

2 disordered regions span residues 1-20 (MANGAEDVVFCRGTGQSDDS) and 42-77 (ALKGEDGATPQENDNPGKKRKNNKKNKSRKRCNAAP). Residue Thr14 is modified to Phosphothreonine. Ser17 and Ser20 each carry phosphoserine. The span at 59-73 (KKRKNNKKNKSRKRC) shows a compositional bias: basic residues. Residues 80-140 (EWQVGDSCYA…LTEPPDMDED (61 aa)) enclose the Tudor domain. Over residues 145-159 (ANVKETESSTEESDR) the composition is skewed to basic and acidic residues. The segment at 145 to 242 (ANVKETESST…PMSPDFGEDD (98 aa)) is disordered. 2 stretches are compositionally biased toward pro residues: residues 179–197 (MGPPSWFPSFPPGPPPPPP) and 212–235 (PSFPGWPPMIPLGPPMIPPPPPMS). The P2 (binding site for SNRPB) stretch occupies residues 225–252 (PPMIPPPPPMSPDFGEDDEALGSMLISW). A required for interaction with SYNCRIP region spans residues 264 to 279 (GLRQGRKEAAASKKSH).

This sequence belongs to the SMN family. In terms of assembly, homodimer. Component of an import snRNP complex composed of kpnb1, rnut1, smn1 and znf259. Part of the core SMN complex that contains smn1, gemin2/sip1, ddx20/gemin3, gemin4, gemin5, gemin6, gemin7, gemin8 and strap/unrip. Interacts with ddx20, fbl, nola1, rnut1, syncrip and with several spliceosomal snRNP core Sm proteins, including snrpb, snrpd1, snrpd2, snrpd3, snrpe and ilf3. Interacts with elavl4.

Its subcellular location is the nucleus. The protein resides in the gem. It localises to the cajal body. It is found in the cytoplasm. The protein localises to the cytoplasmic granule. Its subcellular location is the perikaryon. The protein resides in the cell projection. It localises to the neuron projection. It is found in the myofibril. The protein localises to the sarcomere. Its subcellular location is the z line. In terms of biological role, the SMN complex plays an essential role in spliceosomal snRNP assembly in the cytoplasm and is required for pre-mRNA splicing in the nucleus. It may also play a role in the metabolism of snoRNPs. Required in motor neurons and proprioceptive neurons to ensure correct U12 intron splicing and proper levels of tmem41b mRNA. Required for the maturation of motor neuron axonal branches and dendrites. The protein is Survival motor neuron protein 1 (smn1) of Danio rerio (Zebrafish).